Reading from the N-terminus, the 348-residue chain is MKFLDQAKIYVRSGNGGAGCVSFRREKFIEFGGPDGGDGGRGGDVIVECVEGLNTLIDYRFQQHFRAKTGTHGMGKNRAGANGADVVLKVPVGTQIFEEDEETLIADMTEVGQRIVLLKGGNGGFGNAYFKSSTNQAPRRANPGLEGQEKTIILRLKLIADAGLVGLPNAGKSTFLAAVSAAKPKIADYPFTTLTPGLGVVTIDTRSFVLADIPGLIEGAHEGAGLGDRFLGHLERCSILIHLVDGTAEDVAEAYHIIRGEIEAYGAGLEDKPEILCLNKMDALSEEEREEKLALLAEESGSEVRLLSGVSGEGVKEVLRLAADEIWKTRAMEKAEAATGEEEEGWKP.

An Obg domain is found at 1–159 (MKFLDQAKIY…KTIILRLKLI (159 aa)). Residues 160–327 (ADAGLVGLPN…VLRLAADEIW (168 aa)) form the OBG-type G domain. Residues 166 to 173 (GLPNAGKS), 191 to 195 (FTTLT), 212 to 215 (DIPG), 279 to 282 (NKMD), and 308 to 310 (SGV) each bind GTP. Residues serine 173 and threonine 193 each coordinate Mg(2+).

It belongs to the TRAFAC class OBG-HflX-like GTPase superfamily. OBG GTPase family. In terms of assembly, monomer. Requires Mg(2+) as cofactor.

Its subcellular location is the cytoplasm. Functionally, an essential GTPase which binds GTP, GDP and possibly (p)ppGpp with moderate affinity, with high nucleotide exchange rates and a fairly low GTP hydrolysis rate. Plays a role in control of the cell cycle, stress response, ribosome biogenesis and in those bacteria that undergo differentiation, in morphogenesis control. The chain is GTPase Obg from Parvibaculum lavamentivorans (strain DS-1 / DSM 13023 / NCIMB 13966).